We begin with the raw amino-acid sequence, 1194 residues long: F-box only protein 38 (1194 aa).

The region spanning 30–75 (MNQLSHEVLCHIFRYLPLQDIMCMECLSRKLKEAVTLYLRVVRVVD) is the F-box domain. The tract at residues 59 to 119 (KLKEAVTLYL…LHPRYLERRR (61 aa)) is interaction with KLF7. 3 consecutive short sequence motifs (nuclear export signal) follow at residues 194–201 (LHLVGVNV), 307–316 (LEVDLGYLII), and 451–460 (LLPSLEFISL). Disordered stretches follow at residues 487–529 (ALVS…FRPD), 577–776 (EEQA…DAES), 793–879 (RTGR…RARS), and 896–915 (KPCHAMKRKRTADKSTSTSD). Residues 493–510 (NSNNDNDNNAPNNNANLH) are compositionally biased toward low complexity. Position 592 is a phosphothreonine (Thr-592). Residues Ser-599, Ser-601, and Ser-607 each carry the phosphoserine modification. Acidic residues predominate over residues 599-609 (SESDDEEDSLE). 2 stretches are compositionally biased toward basic and acidic residues: residues 622–631 (RYSEREEKTG) and 683–701 (IKADMKAARDVSEKKKSKD). The span at 705-728 (SCSSSSSSTAASTAGNASSPSTAS) shows a compositional bias: low complexity. A phosphoserine mark is found at Ser-742 and Ser-746. Acidic residues predominate over residues 764–774 (EDSEAMEEGDA). A compositionally biased stretch (basic and acidic residues) spans 793 to 804 (RTGRCSDEERPS). Residues 855-867 (SSQPESCDVQSNE) show a composition bias toward polar residues. The segment covering 896 to 906 (KPCHAMKRKRT) has biased composition (basic residues). Positions 902 to 905 (KRKR) match the Nuclear localization signal motif.

Part of the SCF (SKP1-CUL1-F-box) E3 ubiquitin-protein ligase complex SCF(FBXO38) composed of CUL1, SKP1, RBX1 and FBXO38. Interacts with KLF7. Interacts with PDCD1/PD-1. As to expression, expressed at high levels in embryo (developing brain, spinal cord, branchial arms and limbs). Widely expressed at low levels in adult tissues, with highest expression in testis. Expressed in postmeiotic spermatids.

It localises to the cytoplasm. It is found in the cytosol. The protein localises to the nucleus. It functions in the pathway protein modification; protein ubiquitination. Functionally, substrate recognition component of a SCF (SKP1-CUL1-F-box protein) E3 ubiquitin-protein ligase complex which mediates the ubiquitination and subsequent proteasomal degradation of PDCD1/PD-1, thereby regulating T-cells-mediated immunity. Required for anti-tumor activity of T-cells by promoting the degradation of PDCD1/PD-1; the PDCD1-mediated inhibitory pathway being exploited by tumors to attenuate anti-tumor immunity and facilitate tumor survival. May indirectly stimulate the activity of transcription factor KLF7, a regulator of neuronal differentiation, without promoting KLF7 ubiquitination. The polypeptide is F-box only protein 38 (Mus musculus (Mouse)).